A 454-amino-acid chain; its full sequence is Bifunctional protein GlmU (454 aa).

Residues 1–226 are pyrophosphorylase; the sequence is MALNVVILAA…AIEVEGANNR (226 aa). Residues 8 to 11, Lys-22, Gln-73, 78 to 79, 100 to 102, Gly-137, Glu-151, Asn-166, and Asn-224 contribute to the UDP-N-acetyl-alpha-D-glucosamine site; these read LAAG, GT, and YGD. Mg(2+) is bound at residue Asp-102. Residue Asn-224 coordinates Mg(2+). Positions 227 to 247 are linker; sequence VQLAQLERAYQAREAEKLMIA. The interval 248-454 is N-acetyltransferase; sequence GANLRDPSRI…GWQRPVKIKK (207 aa). UDP-N-acetyl-alpha-D-glucosamine is bound by residues Arg-330 and Lys-348. His-360 (proton acceptor) is an active-site residue. UDP-N-acetyl-alpha-D-glucosamine-binding residues include Tyr-363 and Asn-374. Acetyl-CoA-binding positions include Ala-377, 383-384, Ser-402, Ala-420, and Arg-437; that span reads NY.

This sequence in the N-terminal section; belongs to the N-acetylglucosamine-1-phosphate uridyltransferase family. It in the C-terminal section; belongs to the transferase hexapeptide repeat family. In terms of assembly, homotrimer. Mg(2+) serves as cofactor.

The protein resides in the cytoplasm. The catalysed reaction is alpha-D-glucosamine 1-phosphate + acetyl-CoA = N-acetyl-alpha-D-glucosamine 1-phosphate + CoA + H(+). It catalyses the reaction N-acetyl-alpha-D-glucosamine 1-phosphate + UTP + H(+) = UDP-N-acetyl-alpha-D-glucosamine + diphosphate. Its pathway is nucleotide-sugar biosynthesis; UDP-N-acetyl-alpha-D-glucosamine biosynthesis; N-acetyl-alpha-D-glucosamine 1-phosphate from alpha-D-glucosamine 6-phosphate (route II): step 2/2. The protein operates within nucleotide-sugar biosynthesis; UDP-N-acetyl-alpha-D-glucosamine biosynthesis; UDP-N-acetyl-alpha-D-glucosamine from N-acetyl-alpha-D-glucosamine 1-phosphate: step 1/1. It participates in bacterial outer membrane biogenesis; LPS lipid A biosynthesis. Functionally, catalyzes the last two sequential reactions in the de novo biosynthetic pathway for UDP-N-acetylglucosamine (UDP-GlcNAc). The C-terminal domain catalyzes the transfer of acetyl group from acetyl coenzyme A to glucosamine-1-phosphate (GlcN-1-P) to produce N-acetylglucosamine-1-phosphate (GlcNAc-1-P), which is converted into UDP-GlcNAc by the transfer of uridine 5-monophosphate (from uridine 5-triphosphate), a reaction catalyzed by the N-terminal domain. This chain is Bifunctional protein GlmU, found in Shewanella sp. (strain ANA-3).